A 110-amino-acid polypeptide reads, in one-letter code: Large ribosomal subunit protein uL24 (110 aa).

It belongs to the universal ribosomal protein uL24 family. In terms of assembly, part of the 50S ribosomal subunit.

In terms of biological role, one of two assembly initiator proteins, it binds directly to the 5'-end of the 23S rRNA, where it nucleates assembly of the 50S subunit. Its function is as follows. One of the proteins that surrounds the polypeptide exit tunnel on the outside of the subunit. The sequence is that of Large ribosomal subunit protein uL24 from Roseiflexus sp. (strain RS-1).